Here is a 117-residue protein sequence, read N- to C-terminus: Large ribosomal subunit protein bL20 (117 aa).

Belongs to the bacterial ribosomal protein bL20 family.

Its function is as follows. Binds directly to 23S ribosomal RNA and is necessary for the in vitro assembly process of the 50S ribosomal subunit. It is not involved in the protein synthesizing functions of that subunit. This is Large ribosomal subunit protein bL20 from Geotalea daltonii (strain DSM 22248 / JCM 15807 / FRC-32) (Geobacter daltonii).